The sequence spans 108 residues: Replication restart protein PriB (108 aa).

An SSB domain is found at Ile8–Asp108.

It belongs to the PriB family. As to quaternary structure, homodimer. Interacts with PriA and DnaT. Component of the replication restart primosome. Primosome assembly occurs via a 'hand-off' mechanism. PriA binds to replication forks, subsequently PriB then DnaT bind; DnaT then displaces ssDNA to generate the helicase loading substrate.

Involved in the restart of stalled replication forks, which reloads the replicative helicase on sites other than the origin of replication; the PriA-PriB pathway is the major replication restart pathway. During primosome assembly it facilitates complex formation between PriA and DnaT on DNA; stabilizes PriA on DNA. Stimulates the DNA unwinding activity of PriA helicase. This Haemophilus influenzae (strain ATCC 51907 / DSM 11121 / KW20 / Rd) protein is Replication restart protein PriB.